A 1190-amino-acid chain; its full sequence is MPALWLRCGLCLALLLPAARASSGSQVCDCNGKSRQCIFDQELHKQTGNGFRCLNCNDNTDGIHCERCKAGFYRQRERDRCLPCNCNSKGSLSARCDNSGRCSCKPGVTGDRCDRCLPGFHTLTDAGCAQDQRLLDSKCDCDPAGISGPCDSGRCVCKPAVTGERCDRCRPGYYHLDGGNPQGCTQCFCYGHSASCHSSGDYSVHKIISAFHQDVDGWKAVQRNGSPAKLQWSQRHRDIFSSARRSDPVYFVAPAKFLGNQQVSYGQSLSFDYRVDRGGRHPSAHDVILEGAGLRITAPLMPLSKTLPCGITKTYTFRLNEHPSSNWSPQLSYFEYRRLLRNLTALRIRATYGEYSTGYIDNVTLISARPVSGAPAPWVEQCVCPVGYKGQFCQDCASGYKRDSARLGPFGTCIPCNCQGGGACDPDTGDCYSGDENPDIPECADCPIGFYNDPQDPRSCKPCPCRNGFSCSVMPETEEVVCNNCPQGVTGARCELCADGYFGDPFGERGPVRPCQPCQCNNNVDPSASGNCDRLTGRCLKCIHNTAGVHCDQCKAGYYGDPLAPNPADKCRACNCNPVGSEPVECRSDGSCVCKPGFGGLSCEHAALTSCPACYNQVKVQMDQFMQQLQILEALISKAQGGAVPNAELEGRMQQAEQALRDILREAQISQDAVRSFNLRVAKARTQENSYRDRLDDLKMTVERVRALGSQYQNQVQDTRRLITQMRLSLEESEASLQNTNIPPSEHYVGPNGFKSLAQEATRLADSHVQSASNMEQLAKETQEYSKELMSLVREALQEGGGSGSLDGAVVQRLVGKLQKTKSLAQELSREATQTDMEADRSYQHSLHLLNSVSQIQGVNDQSLQVEAKRLRQKADSLSNRVTKHMDEFKHVQSNLGNWEEETRQLLQNGKNGRQTSDQLLSRANLAKSRAQEALSMGNATFYEVENILKNLREFDLQVGDKRAEAEEAMKRLSYISQKVAGASDKTKQAEAALGSAAADAQRAKNAAREALEISGKIEQEIGGLNLEANVTADGALAMEKGLATLKSEMREVEGELSRKEQEFDMDMDAVQMVIAEAQRVENRAKNAGVTIQDTLNTLDGILHLIDQPGSVDEERLILLEQKLFRAKTQINSQLRPLMSELEERAHRQKGHLRFLETSIDGILADVKNLENIRDNLPPGCYNTQALEQQ.

The signal sequence occupies residues 1–21 (MPALWLRCGLCLALLLPAARA). Intrachain disulfides connect Cys28-Cys37, Cys30-Cys53, Cys56-Cys65, Cys68-Cys81, Cys84-Cys96, Cys86-Cys102, Cys104-Cys113, Cys116-Cys128, Cys139-Cys150, Cys141-Cys155, Cys157-Cys166, and Cys169-Cys184. Laminin EGF-like domains are found at residues 28 to 83 (CDCN…RCLP), 84 to 130 (CNCN…GCAQ), and 139 to 186 (CDCD…GCTQ). In terms of domain architecture, Laminin EGF-like 4; first part spans 187 to 196 (CFCYGHSASC). The 169-residue stretch at 213–381 (QDVDGWKAVQ…SGAPAPWVEQ (169 aa)) folds into the Laminin IV type A domain. 2 N-linked (GlcNAc...) asparagine glycosylation sites follow: Asn342 and Asn362. Residues 382 to 415 (CVCPVGYKGQFCQDCASGYKRDSARLGPFGTCIP) form the Laminin EGF-like 4; second part domain. Laminin EGF-like domains lie at 416–462 (CNCQ…SCKP), 463–517 (CPCR…PCQP), and 518–573 (CQCN…KCRA). 11 disulfides stabilise this stretch: Cys463-Cys471, Cys465-Cys482, Cys485-Cys494, Cys497-Cys515, Cys518-Cys532, Cys520-Cys539, Cys542-Cys551, Cys554-Cys571, Cys574-Cys586, Cys576-Cys592, and Cys594-Cys603. The 30-residue stretch at 574–603 (CNCNPVGSEPVECRSDGSCVCKPGFGGLSC) folds into the Laminin EGF-like 8; truncated domain. Positions 604–1190 (EHAALTSCPA…CYNTQALEQQ (587 aa)) are domain II and I. Residues 613–718 (ACYNQVKVQM…GSQYQNQVQD (106 aa)) are a coiled coil. Residue Ser803 is glycosylated (O-linked (Xyl...) (chondroitin sulfate) serine). Coiled-coil stretches lie at residues 809 to 1073 (AVVQ…AVQM) and 1114 to 1190 (EERL…LEQQ). Asn939 and Asn1030 each carry an N-linked (GlcNAc...) asparagine glycan.

Laminin is a complex glycoprotein, consisting of three different polypeptide chains (alpha, beta, gamma), which are bound to each other by disulfide bonds into a cross-shaped molecule comprising one long and three short arms with globules at each end. Gamma-2 is a subunit of laminin-5 (laminin-332 or epiligrin/kalinin/nicein). O-glycosylated; contains chondroitin sulfate (CS).

The protein localises to the secreted. Its subcellular location is the extracellular space. It localises to the extracellular matrix. It is found in the basement membrane. Functionally, binding to cells via a high affinity receptor, laminin is thought to mediate the attachment, migration and organization of cells into tissues during embryonic development by interacting with other extracellular matrix components. Ladsin exerts cell-scattering activity toward a wide variety of cells, including epithelial, endothelial, and fibroblastic cells. This Equus caballus (Horse) protein is Laminin subunit gamma-2 (LAMC2).